A 134-amino-acid chain; its full sequence is Transcription antitermination protein NusB (134 aa).

The protein belongs to the NusB family.

In terms of biological role, involved in transcription antitermination. Required for transcription of ribosomal RNA (rRNA) genes. Binds specifically to the boxA antiterminator sequence of the ribosomal RNA (rrn) operons. The polypeptide is Transcription antitermination protein NusB (Shewanella oneidensis (strain ATCC 700550 / JCM 31522 / CIP 106686 / LMG 19005 / NCIMB 14063 / MR-1)).